The primary structure comprises 273 residues: Flagellin FljK (273 aa).

This sequence belongs to the bacterial flagellin family. As to quaternary structure, in C.crescentus, the flagellar filament is composed of multiple flagellins of 29 kDa; 27 kDa and 25 kDa.

The protein localises to the secreted. Its subcellular location is the bacterial flagellum. In terms of biological role, flagellin is the subunit protein which polymerizes to form the filaments of bacterial flagella. In Caulobacter vibrioides (strain ATCC 19089 / CIP 103742 / CB 15) (Caulobacter crescentus), this protein is Flagellin FljK (fljK).